Reading from the N-terminus, the 473-residue chain is Bifunctional protein HldE (473 aa).

Residues 1–316 (MILPDFSLAR…AIAIHGQRAP (316 aa)) are ribokinase. 193–196 (NLSE) is an ATP binding site. The active site involves Asp262. The interval 342–473 (VTNGCFDLLH…TRIIEAIRNG (132 aa)) is cytidylyltransferase.

The protein in the N-terminal section; belongs to the carbohydrate kinase PfkB family. In the C-terminal section; belongs to the cytidylyltransferase family. As to quaternary structure, homodimer.

It catalyses the reaction D-glycero-beta-D-manno-heptose 7-phosphate + ATP = D-glycero-beta-D-manno-heptose 1,7-bisphosphate + ADP + H(+). It carries out the reaction D-glycero-beta-D-manno-heptose 1-phosphate + ATP + H(+) = ADP-D-glycero-beta-D-manno-heptose + diphosphate. The protein operates within nucleotide-sugar biosynthesis; ADP-L-glycero-beta-D-manno-heptose biosynthesis; ADP-L-glycero-beta-D-manno-heptose from D-glycero-beta-D-manno-heptose 7-phosphate: step 1/4. It functions in the pathway nucleotide-sugar biosynthesis; ADP-L-glycero-beta-D-manno-heptose biosynthesis; ADP-L-glycero-beta-D-manno-heptose from D-glycero-beta-D-manno-heptose 7-phosphate: step 3/4. In terms of biological role, catalyzes the phosphorylation of D-glycero-D-manno-heptose 7-phosphate at the C-1 position to selectively form D-glycero-beta-D-manno-heptose-1,7-bisphosphate. Functionally, catalyzes the ADP transfer from ATP to D-glycero-beta-D-manno-heptose 1-phosphate, yielding ADP-D-glycero-beta-D-manno-heptose. This Methylococcus capsulatus (strain ATCC 33009 / NCIMB 11132 / Bath) protein is Bifunctional protein HldE.